The chain runs to 365 residues: H-2 class I histocompatibility antigen, D-D alpha chain (365 aa).

The first 24 residues, 1–24 (MGAMAPRTLLLLLAAALGPTQTRA), serve as a signal peptide directing secretion. Residues 25 to 114 (GSHSLRYFVT…ALRYYNQSAG (90 aa)) form an alpha-1 region. The Extracellular segment spans residues 25 to 311 (GSHSLRYFVT…EPPSSTKTNT (287 aa)). N-linked (GlcNAc...) asparagine glycosylation is present at Asn-110. An alpha-2 region spans residues 115 to 206 (GSHTLQWMAG…KNGNATLLRT (92 aa)). Cys-125 and Cys-188 form a disulfide bridge. N-linked (GlcNAc...) asparagine glycosylation occurs at Asn-200. The interval 207–298 (DPPKAHVTHH…GLPEPLTLRW (92 aa)) is alpha-3. In terms of domain architecture, Ig-like C1-type spans 209–297 (PKAHVTHHRR…EGLPEPLTLR (89 aa)). A disulfide bridge connects residues Cys-227 and Cys-283. Residues 299 to 311 (GKEEPPSSTKTNT) are connecting peptide. Residues 312 to 334 (VIIAVPVVLGAVVILGAVMAFVM) traverse the membrane as a helical segment. Topologically, residues 335-365 (KRRRNTGGKGGDYALAPGSQSSDMSLPDCKV) are cytoplasmic. The tract at residues 343-365 (KGGDYALAPGSQSSDMSLPDCKV) is disordered. Phosphoserine occurs at positions 356 and 359.

This sequence belongs to the MHC class I family. Heterodimer of an alpha chain and a beta chain (beta-2-microglobulin).

Its subcellular location is the membrane. In terms of biological role, involved in the presentation of foreign antigens to the immune system. In Mus musculus (Mouse), this protein is H-2 class I histocompatibility antigen, D-D alpha chain (H2-D1).